Here is a 447-residue protein sequence, read N- to C-terminus: Phosphoglucosamine mutase (447 aa).

The Phosphoserine intermediate role is filled by serine 101. 4 residues coordinate Mg(2+): serine 101, aspartate 242, aspartate 244, and aspartate 246. Serine 101 is subject to Phosphoserine.

The protein belongs to the phosphohexose mutase family. Mg(2+) serves as cofactor. Activated by phosphorylation.

The catalysed reaction is alpha-D-glucosamine 1-phosphate = D-glucosamine 6-phosphate. Functionally, catalyzes the conversion of glucosamine-6-phosphate to glucosamine-1-phosphate. This is Phosphoglucosamine mutase from Methylobacterium radiotolerans (strain ATCC 27329 / DSM 1819 / JCM 2831 / NBRC 15690 / NCIMB 10815 / 0-1).